The primary structure comprises 464 residues: Cysteine--tRNA ligase (464 aa).

Cys-29 provides a ligand contact to Zn(2+). The short motif at 31–41 (ATVQGDPHIGH) is the 'HIGH' region element. The Zn(2+) site is built by Cys-207, His-232, and Glu-236. The 'KMSKS' region signature appears at 263–267 (KMSKS). ATP is bound at residue Lys-266.

Belongs to the class-I aminoacyl-tRNA synthetase family. As to quaternary structure, monomer. The cofactor is Zn(2+).

It is found in the cytoplasm. It carries out the reaction tRNA(Cys) + L-cysteine + ATP = L-cysteinyl-tRNA(Cys) + AMP + diphosphate. The chain is Cysteine--tRNA ligase from Rhodococcus opacus (strain B4).